Reading from the N-terminus, the 71-residue chain is Lantibiotic Flvbeta.c (71 aa).

A propeptide spans 1-33 (MENKFDMEKFKKLAAVVSEDELDTLLDETTVGA) (cleaved by FlvT). Residues 35–39 (SSNDC) constitute a cross-link (lanthionine (Ser-Cys); by FlvM2). S36 is modified (2,3-didehydroalanine (Ser); by FlvM2). 3 consecutive cross-links (beta-methyllanthionine (Thr-Cys); by FlvM2) follow at residues 54 to 60 (TSKFDWC), 62 to 65 (TGAC), and 66 to 69 (TTSC).

Contains LL-lanthionine and DL-beta-methyllanthionine, when coepressed in E.coli with the flavecin synthetase FlvM2.

It localises to the secreted. In terms of biological role, lanthionine-containing peptide antibiotic (lantibiotic) that is probably active on Gram-positive bacteria, since its analog [Del1]Flvbeta.c shows antibacterial activity against M.luteus. This activity is not synergistically enhanced by [Del2]Flvalpha.a, an analog of Flvalpha.a, which is encoded by the same operon than Flvbeta.c. The bactericidal activity of lantibiotics is based on depolarization of energized bacterial cytoplasmic membranes, initiated by the formation of aqueous transmembrane pores. The chain is Lantibiotic Flvbeta.c from Ruminococcus flavefaciens.